Reading from the N-terminus, the 294-residue chain is UDP-3-O-acyl-N-acetylglucosamine deacetylase (294 aa).

Residues His75, His232, and Asp236 each contribute to the Zn(2+) site. The active-site Proton donor is the His259.

The protein belongs to the LpxC family. Zn(2+) is required as a cofactor.

The enzyme catalyses a UDP-3-O-[(3R)-3-hydroxyacyl]-N-acetyl-alpha-D-glucosamine + H2O = a UDP-3-O-[(3R)-3-hydroxyacyl]-alpha-D-glucosamine + acetate. The protein operates within glycolipid biosynthesis; lipid IV(A) biosynthesis; lipid IV(A) from (3R)-3-hydroxytetradecanoyl-[acyl-carrier-protein] and UDP-N-acetyl-alpha-D-glucosamine: step 2/6. Catalyzes the hydrolysis of UDP-3-O-myristoyl-N-acetylglucosamine to form UDP-3-O-myristoylglucosamine and acetate, the committed step in lipid A biosynthesis. This chain is UDP-3-O-acyl-N-acetylglucosamine deacetylase, found in Campylobacter jejuni subsp. jejuni serotype O:2 (strain ATCC 700819 / NCTC 11168).